Consider the following 1115-residue polypeptide: Carbamoyl phosphate synthase large chain (1115 aa).

The segment at 1-407 (MPRRTDLHHV…ALGKVMRSLE (407 aa)) is carboxyphosphate synthetic domain. ATP-binding residues include Arg134, Arg174, Gly180, Gly181, Glu213, Ile215, Glu220, Gly246, Val247, His248, Gln290, and Glu304. In terms of domain architecture, ATP-grasp 1 spans 138-333 (KDIVAKAGGE…IAKIAAKLAI (196 aa)). Mg(2+)-binding residues include Gln290, Glu304, and Asn306. Positions 290, 304, and 306 each coordinate Mn(2+). The segment at 408–559 (TTRAGFWTAP…ELDPAAETEV (152 aa)) is oligomerization domain. The tract at residues 560 to 965 (APQTERPKVL…AFAKSQTAAY (406 aa)) is carbamoyl phosphate synthetic domain. In terms of domain architecture, ATP-grasp 2 spans 693–884 (GDLLSAAGLP…LAKACARIML (192 aa)). ATP contacts are provided by Arg729, Arg768, Leu770, Glu775, Gly800, Ile801, His802, Ser803, Gln843, and Glu855. Gln843, Glu855, and Asn857 together coordinate Mg(2+). Mn(2+) contacts are provided by Gln843, Glu855, and Asn857. The 148-residue stretch at 966–1113 (GSLPAQGTVF…QELHRVIGGV (148 aa)) folds into the MGS-like domain. The interval 966–1115 (GSLPAQGTVF…LHRVIGGVER (150 aa)) is allosteric domain.

This sequence belongs to the CarB family. Composed of two chains; the small (or glutamine) chain promotes the hydrolysis of glutamine to ammonia, which is used by the large (or ammonia) chain to synthesize carbamoyl phosphate. Tetramer of heterodimers (alpha,beta)4. Mg(2+) is required as a cofactor. Requires Mn(2+) as cofactor.

The catalysed reaction is hydrogencarbonate + L-glutamine + 2 ATP + H2O = carbamoyl phosphate + L-glutamate + 2 ADP + phosphate + 2 H(+). It catalyses the reaction hydrogencarbonate + NH4(+) + 2 ATP = carbamoyl phosphate + 2 ADP + phosphate + 2 H(+). The protein operates within amino-acid biosynthesis; L-arginine biosynthesis; carbamoyl phosphate from bicarbonate: step 1/1. It functions in the pathway pyrimidine metabolism; UMP biosynthesis via de novo pathway; (S)-dihydroorotate from bicarbonate: step 1/3. Large subunit of the glutamine-dependent carbamoyl phosphate synthetase (CPSase). CPSase catalyzes the formation of carbamoyl phosphate from the ammonia moiety of glutamine, carbonate, and phosphate donated by ATP, constituting the first step of 2 biosynthetic pathways, one leading to arginine and/or urea and the other to pyrimidine nucleotides. The large subunit (synthetase) binds the substrates ammonia (free or transferred from glutamine from the small subunit), hydrogencarbonate and ATP and carries out an ATP-coupled ligase reaction, activating hydrogencarbonate by forming carboxy phosphate which reacts with ammonia to form carbamoyl phosphate. This chain is Carbamoyl phosphate synthase large chain, found in Mycobacterium bovis (strain ATCC BAA-935 / AF2122/97).